Here is a 36-residue protein sequence, read N- to C-terminus: Phospholipase A2 hemilipin-2 (36 aa).

This sequence belongs to the phospholipase A2 family. Group III subfamily. In terms of assembly, heterodimer composed of a small subunit and a large subunit; disulfid-linked. It depends on Ca(2+) as a cofactor. In terms of tissue distribution, expressed by the venom gland.

Its subcellular location is the secreted. It catalyses the reaction a 1,2-diacyl-sn-glycero-3-phosphocholine + H2O = a 1-acyl-sn-glycero-3-phosphocholine + a fatty acid + H(+). Scorpion venom phospholipase A2 (PLA2) that impacts angiogenesis in vitro and in vivo without showing any cytotoxic or apoptotic signs. The antiangiogenic effect is independent from the catalytic activity and seems to be held by its small subunit. PLA2 catalyzes the calcium-dependent hydrolysis of the 2-acyl groups in 3-sn-phosphoglycerides. This is Phospholipase A2 hemilipin-2 from Hemiscorpius lepturus (Scorpion).